A 485-amino-acid polypeptide reads, in one-letter code: ATP-dependent rRNA helicase RRP3 (485 aa).

The span at 1 to 10 (MPVLKKRKLA) shows a compositional bias: basic residues. Residues 1-55 (MPVLKKRKLAHTAQPDPIVSDLESSSSEASQQSHDEQLTAANEQDDESPQVQREE) are disordered. Over residues 20-32 (SDLESSSSEASQQ) the composition is skewed to low complexity. The Q motif motif lies at 59 to 87 (KSFKDLGIIDSLCEACEALGYKSPTPIQA). Residues 90-261 (IPLALQGRDL…RASLSNPLRV (172 aa)) enclose the Helicase ATP-binding domain. 103–110 (AETGSGKT) contributes to the ATP binding site. A DEAD box motif is present at residues 209–212 (DEAD). In terms of domain architecture, Helicase C-terminal spans 285-433 (YKDIYLVYLL…EYKVEKEEVM (149 aa)). The segment covering 449–458 (EMKDLHEKRG) has biased composition (basic and acidic residues). Residues 449–485 (EMKDLHEKRGSRGATLKGRRPAKGAKRGRDEMDREEG) are disordered. Basic residues predominate over residues 465 to 474 (KGRRPAKGAK). A compositionally biased stretch (basic and acidic residues) spans 475-485 (RGRDEMDREEG).

Belongs to the DEAD box helicase family. DDX47/RRP3 subfamily. In terms of assembly, interacts with the SSU processome.

It is found in the nucleus. It carries out the reaction ATP + H2O = ADP + phosphate + H(+). Functionally, ATP-dependent rRNA helicase required for pre-ribosomal RNA processing. Involved in the maturation of the 35S-pre-rRNA and to its cleavage to mature 18S rRNA. The protein is ATP-dependent rRNA helicase RRP3 of Ajellomyces capsulatus (strain NAm1 / WU24) (Darling's disease fungus).